We begin with the raw amino-acid sequence, 109 residues long: Phycoerythrin alpha-1 subunit (109 aa).

(2R,3E)-phycocyanobilin is bound by residues valine 6, alanine 16, phenylalanine 17, proline 20, aspartate 27, alanine 28, and alanine 39.

It belongs to the phycoerythrin family. In terms of assembly, heterotetramer of 2 identical alpha chains and 2 identical beta chains which form 2 alpha-beta heterodimers within the heterotetramer. The two alpha-beta heterodimers are rotated to an open configuration in contrast to the closed configuration found in other cryptophyte species due to the insertion of a single amino acid, Asp-65, in a conserved region of the alpha chain. In the open form, the central chromophores are not in physical contact but are separated by a water-filled channel. Contains three phycocyanobilin chromophores with binding mediated by both the alpha and beta subunits.

Its subcellular location is the plastid. It localises to the chloroplast thylakoid membrane. Functionally, light-harvesting photosynthetic tetrapyrrole chromophore-protein from the phycobiliprotein complex. This chain is Phycoerythrin alpha-1 subunit, found in Hemiselmis virescens.